A 136-amino-acid polypeptide reads, in one-letter code: Small ribosomal subunit protein uS19 (136 aa).

The tract at residues 117–136 (VQHGDPGMGATRSSMFVPLK) is disordered.

This sequence belongs to the universal ribosomal protein uS19 family.

Its function is as follows. Protein S19 forms a complex with S13 that binds strongly to the 16S ribosomal RNA. This chain is Small ribosomal subunit protein uS19, found in Methanobrevibacter smithii (strain ATCC 35061 / DSM 861 / OCM 144 / PS).